We begin with the raw amino-acid sequence, 85 residues long: MGDVALIIKVMPESPEVNRETIVATIKEKFPRVQDIREEPIGFGLVAIKVALVVPDAEGQTETIEATLNAIDGVERAEIVESTLV.

This sequence belongs to the EF-1-beta/EF-1-delta family.

Promotes the exchange of GDP for GTP in EF-1-alpha/GDP, thus allowing the regeneration of EF-1-alpha/GTP that could then be used to form the ternary complex EF-1-alpha/GTP/AAtRNA. This Methanospirillum hungatei JF-1 (strain ATCC 27890 / DSM 864 / NBRC 100397 / JF-1) protein is Elongation factor 1-beta.